Here is a 234-residue protein sequence, read N- to C-terminus: Ammonia monooxygenase gamma subunit (234 aa).

Positions 1–20 (MRMIKFLLLAILLAPFVAHS) are cleaved as a signal peptide. The Cytochrome c domain occupies 38–193 (ESLQRGAKGF…RFVADLVNYM (156 aa)). Positions 51, 54, and 55 each coordinate heme c. Residues 206–226 (ELGITVLLFLFGMLGLTYLLK) form a helical membrane-spanning segment.

It belongs to the cytochrome c family. As to quaternary structure, the soluble ammonia monooxygenase is a nonamer composed of three alpha subunits (AmoA), three beta subunits (AmoB) and three gamma subunits (Cytochrome c1 PetC). The cofactor is heme c.

It localises to the cell membrane. Its subcellular location is the cytoplasm. Functionally, part of the ammonia monooxygenase complex, which catalyzes the oxidation of ammonia to hydroxylamine, the first reaction in the process of ammonia oxidation to nitrite. This Nitrosomonas europaea (strain ATCC 19718 / CIP 103999 / KCTC 2705 / NBRC 14298) protein is Ammonia monooxygenase gamma subunit.